Reading from the N-terminus, the 336-residue chain is MTEIQKPYDLKGRSLLKESDFTKAEFEGLIDFAITLKEYKKNGIKHHYLSGKNIALLFEKNSTRTRAAFTVASIDLGAHPEFLGKNDIQLGKKESVEDTAKVLGRMFDGIEFRGFSQQAVEDLAKFSGVPVWNGLTDDWHPTQMLADFMTIKENFGYLEGINLTYVGDGRNNIAHSLMVAGAMLGVNVRICTPKSLNPKDAYVDIAKEKASQYGGSVMITDNIAEAVENTDAIYTDVWVSMGEESEFEQRINLLKDYQVNQQLFDLTGKDSTIFLHCLPAFHDTNTLYGQEIYEKYGLAEMEVTDQIFRSEHSKVFDQAENRMHTIKAVMAATLGS.

Carbamoyl phosphate contacts are provided by residues 62–65, Gln89, Arg113, and 140–143; these read STRT and HPTQ. L-ornithine-binding positions include Asn172, Asp236, and 240–241; that span reads SM. Carbamoyl phosphate is bound by residues 277–278 and Arg322; that span reads CL.

Belongs to the aspartate/ornithine carbamoyltransferase superfamily. OTCase family.

The protein localises to the cytoplasm. It carries out the reaction carbamoyl phosphate + L-ornithine = L-citrulline + phosphate + H(+). It participates in amino-acid degradation; L-arginine degradation via ADI pathway; carbamoyl phosphate from L-arginine: step 2/2. Its function is as follows. Reversibly catalyzes the transfer of the carbamoyl group from carbamoyl phosphate (CP) to the N(epsilon) atom of ornithine (ORN) to produce L-citrulline. This chain is Ornithine carbamoyltransferase, catabolic, found in Staphylococcus aureus (strain MRSA252).